The following is an 886-amino-acid chain: Pyruvate dehydrogenase E1 component (886 aa).

In terms of assembly, homodimer. Part of the PDH complex, consisting of multiple copies of pyruvate dehydrogenase (E1), dihydrolipoamide acetyltransferase (E2) and lipoamide dehydrogenase (E3). It depends on thiamine diphosphate as a cofactor.

It carries out the reaction N(6)-[(R)-lipoyl]-L-lysyl-[protein] + pyruvate + H(+) = N(6)-[(R)-S(8)-acetyldihydrolipoyl]-L-lysyl-[protein] + CO2. Component of the pyruvate dehydrogenase (PDH) complex, that catalyzes the overall conversion of pyruvate to acetyl-CoA and CO(2). The sequence is that of Pyruvate dehydrogenase E1 component (aceE) from Haemophilus influenzae (strain ATCC 51907 / DSM 11121 / KW20 / Rd).